Consider the following 107-residue polypeptide: Large ribosomal subunit protein P1 (107 aa).

A disordered region spans residues 67–107; sequence GAAPAAAAPAAGGAPAAGAAPKKEEKKEPSEEEDMGFSLFD. Residues 69–86 show a composition bias toward low complexity; sequence APAAAAPAAGGAPAAGAA.

The protein belongs to the eukaryotic ribosomal protein P1/P2 family. In terms of assembly, P1 and P2 exist as dimers at the large ribosomal subunit.

Its function is as follows. Plays an important role in the elongation step of protein synthesis. This Chlamydomonas reinhardtii (Chlamydomonas smithii) protein is Large ribosomal subunit protein P1.